The primary structure comprises 200 residues: Putative biotin transporter BioYB (200 aa).

6 consecutive transmembrane segments (helical) span residues 13 to 33 (LIGMFAALMAVGANITSVAPF), 36 to 56 (VAGIPLSMQPFFCLLAALLLG), 61 to 81 (AIAMIVYALVGLAGAPVFAQF), 90 to 110 (GKSGGFIISYIPAAFAAGWFL), 121 to 141 (FLIASLIGTAIMYLIGTTYMY), and 158 to 178 (WGFMIWFMVKDTALAVILSFI).

This sequence belongs to the BioY family.

The protein resides in the cell membrane. Functionally, putative biotin transporter. The polypeptide is Putative biotin transporter BioYB (bioYB) (Bacillus subtilis (strain 168)).